The following is a 224-amino-acid chain: Envelope glycoprotein L (224 aa).

The first 19 residues, M1–G19, serve as a signal peptide directing secretion. Residues G20–V161 form an interaction with gH region. The 179-residue stretch at S23 to T201 folds into the gL alphaherpesvirus-type domain. 2 cysteine pairs are disulfide-bonded: C44/C76 and C149/C160. Residues V161–L224 are disordered. Residues K213–L224 are compositionally biased toward basic residues.

It belongs to the herpesviridae glycoprotein L (gL) family. Alphaherpesvirinae gL subfamily. In terms of assembly, interacts with glycoprotein H (gH); this interaction is necessary for the correct processing and cell surface expression of gH. The heterodimer gH/gL seems to interact with gB trimers during fusion.

The protein resides in the virion membrane. It is found in the host cell membrane. The protein localises to the host Golgi apparatus. Its subcellular location is the host trans-Golgi network. Its function is as follows. The heterodimer glycoprotein H-glycoprotein L is required for the fusion of viral and plasma membranes leading to virus entry into the host cell. Acts as a functional inhibitor of gH and maintains gH in an inhibited form. Upon binding to host integrins, gL dissociates from gH leading to activation of the viral fusion glycoproteins gB and gH. The sequence is that of Envelope glycoprotein L from Human herpesvirus 1 (strain 17) (HHV-1).